Reading from the N-terminus, the 746-residue chain is F-box only protein 30 (746 aa).

A TRAF-type zinc finger spans residues Glu49–Ser110. 2 disordered regions span residues Met222–His241 and Ile247–Gln266. Basic and acidic residues predominate over residues Glu225–His241. Residues Ser256–Gln266 show a composition bias toward polar residues. Ser383 carries the phosphoserine modification. The F-box domain maps to Ser611–Ile659.

In terms of assembly, part of a SCF (SKP1-cullin-F-box) protein ligase complex. Interacts with SKP1, CUL1 and RBX1/ROC1. Post-translationally, auto-ubiquitinated. In terms of processing, may be neddylated. Neddylation may be required for E3 ligase activity, since it was observed only after purification with o-phenanthroline.

The protein operates within protein modification; protein ubiquitination. In terms of biological role, substrate-recognition component of the SCF (SKP1-CUL1-F-box protein)-type E3 ubiquitin ligase complex. Required for muscle atrophy following denervation. The chain is F-box only protein 30 (Fbxo30) from Mus musculus (Mouse).